The chain runs to 901 residues: Probable inorganic carbon transporter subunit DabA (901 aa).

Zn(2+) is bound by residues Cys-424, Asp-426, His-606, and Cys-621.

The protein belongs to the inorganic carbon transporter (TC 9.A.2) DabA family. Forms a complex with DabB. It depends on Zn(2+) as a cofactor.

The protein localises to the cell membrane. Its function is as follows. Part of an energy-coupled inorganic carbon pump. This chain is Probable inorganic carbon transporter subunit DabA, found in Staphylococcus aureus (strain NCTC 8325 / PS 47).